The primary structure comprises 71 residues: Pro-glucagon (71 aa).

This sequence belongs to the glucagon family.

It localises to the secreted. In terms of biological role, plays a key role in glucose metabolism and homeostasis. Regulates blood glucose by increasing gluconeogenesis and decreasing glycolysis. This chain is Pro-glucagon (gcg), found in Ictalurus punctatus (Channel catfish).